The following is a 238-amino-acid chain: Probable transcriptional regulatory protein MGAS10750_Spy0264 (238 aa).

It belongs to the TACO1 family. YeeN subfamily.

Its subcellular location is the cytoplasm. This chain is Probable transcriptional regulatory protein MGAS10750_Spy0264, found in Streptococcus pyogenes serotype M4 (strain MGAS10750).